A 460-amino-acid chain; its full sequence is tRNA modification GTPase MnmE (460 aa).

Residues Arg23, Glu86, and Arg126 each contribute to the (6S)-5-formyl-5,6,7,8-tetrahydrofolate site. The region spanning 222-381 is the TrmE-type G domain; that stretch reads GLSTAIIGRP…LEAAIASLFF (160 aa). Asn232 contributes to the K(+) binding site. Residues 232–237, 251–257, and 276–279 each bind GTP; these read NVGKSS, TDIAGTT, and DTAG. Ser236 is a binding site for Mg(2+). K(+) is bound by residues Thr251, Ile253, and Thr256. Thr257 is a Mg(2+) binding site. Lys460 is a (6S)-5-formyl-5,6,7,8-tetrahydrofolate binding site.

Belongs to the TRAFAC class TrmE-Era-EngA-EngB-Septin-like GTPase superfamily. TrmE GTPase family. Homodimer. Heterotetramer of two MnmE and two MnmG subunits. K(+) is required as a cofactor.

The protein resides in the cytoplasm. In terms of biological role, exhibits a very high intrinsic GTPase hydrolysis rate. Involved in the addition of a carboxymethylaminomethyl (cmnm) group at the wobble position (U34) of certain tRNAs, forming tRNA-cmnm(5)s(2)U34. The sequence is that of tRNA modification GTPase MnmE from Exiguobacterium sibiricum (strain DSM 17290 / CCUG 55495 / CIP 109462 / JCM 13490 / 255-15).